The primary structure comprises 273 residues: Large ribosomal subunit protein uL2 (273 aa).

Residues V228–K273 are disordered. Positions K254–K273 are enriched in basic residues.

This sequence belongs to the universal ribosomal protein uL2 family. Part of the 50S ribosomal subunit. Forms a bridge to the 30S subunit in the 70S ribosome.

In terms of biological role, one of the primary rRNA binding proteins. Required for association of the 30S and 50S subunits to form the 70S ribosome, for tRNA binding and peptide bond formation. It has been suggested to have peptidyltransferase activity; this is somewhat controversial. Makes several contacts with the 16S rRNA in the 70S ribosome. This chain is Large ribosomal subunit protein uL2, found in Rickettsia bellii (strain OSU 85-389).